Here is a 51-residue protein sequence, read N- to C-terminus: Large ribosomal subunit protein eL40 (51 aa).

The protein belongs to the eukaryotic ribosomal protein eL40 family.

The sequence is that of Large ribosomal subunit protein eL40 from Thermococcus gammatolerans (strain DSM 15229 / JCM 11827 / EJ3).